Reading from the N-terminus, the 414-residue chain is Diaminopimelate decarboxylase (414 aa).

Lys52 is modified (N6-(pyridoxal phosphate)lysine). Pyridoxal 5'-phosphate is bound by residues Gly231 and 265-268 (EPGR). Substrate-binding residues include Arg268, Arg304, and Tyr308. The Proton donor role is filled by Cys334. Glu335 and Tyr362 together coordinate substrate. Tyr362 provides a ligand contact to pyridoxal 5'-phosphate.

It belongs to the Orn/Lys/Arg decarboxylase class-II family. LysA subfamily. Homodimer. The cofactor is pyridoxal 5'-phosphate.

It carries out the reaction meso-2,6-diaminopimelate + H(+) = L-lysine + CO2. The protein operates within amino-acid biosynthesis; L-lysine biosynthesis via DAP pathway; L-lysine from DL-2,6-diaminopimelate: step 1/1. Specifically catalyzes the decarboxylation of meso-diaminopimelate (meso-DAP) to L-lysine. This is Diaminopimelate decarboxylase from Neisseria meningitidis serogroup B (strain ATCC BAA-335 / MC58).